The primary structure comprises 432 residues: Cyclic GMP-AMP synthase (432 aa).

110–115 (QGSFQY) lines the GTP pocket. Asp-129 and Asp-131 together coordinate Mg(2+). Residue Arg-180 coordinates ATP. Residue Asp-191 participates in Mg(2+) binding. Ser-255 contributes to the ATP binding site. The GTP site is built by Lys-283, Ser-297, and Asp-344. Gly-432 is covalently cross-linked (Glycyl cysteine dithioester (Gly-Cys) (interchain with C-13 in Cap2)). Gly-432 participates in a covalent cross-link: Glycyl cysteine dithioester (Gly-Cys) (interchain with C-493 in Cap2). Gly-432 is covalently cross-linked (Glycyl cysteine dithioester (Gly-Cys) (interchain with C-513 in Cap2)). Gly-432 is covalently cross-linked (Glycyl lysine isopeptide (Gly-Lys) (interchain with K-? in acceptor proteins)).

Belongs to the CD-NTase family. A02 subfamily. A Cap2 dimer is bound on either side by a DncV monomer. Requires Mg(2+) as cofactor. Post-translationally, in bacteria expressing capV-dncV-cap2-cap3, this protein is conjugated to about 130 cellular proteins by Cap2, most of which are involved in metabolism; more conjugated protein is found in the absence of Cap3. Most conjugation occurs via an isopeptide bond with the epsilon-amine of Lys on the target protein, but Cys-conjugation also occurs, including to Cap2. Conjugation or deconjugation from cellular proteins does not change the DncV activity in vitro, but does so in vivo during infection. In terms of processing, (Microbial infection) During phage T4 infection is conjugated to at least 2 T4 proteins (fibritin (wac) and dexA.2).

The catalysed reaction is GTP + ATP = 3',3'-cGAMP + 2 diphosphate. With respect to regulation, primed for activation by Cap2 which conjugates it to cellular proteins. cGAMP production is induced in phage T4 infected cells in a manner that requires Cap2 and Cap3, as well as a C-terminal Ala or Gly residue in this protein. Functionally, cyclic nucleotide synthase (second messenger synthase) of a CBASS antivirus system. CBASS (cyclic oligonucleotide-based antiphage signaling system) provides immunity against bacteriophages. The CD-NTase protein (DncV, this protein) synthesizes cyclic nucleotides in response to infection; these serve as specific second messenger signals. The signals activate a diverse range of effectors, leading to bacterial cell death and thus abortive phage infection. A type II-A(GA) CBASS system. In terms of biological role, catalyzes the synthesis of 3',3'-cyclic GMP-AMP (cGAMP) from GTP and ATP, a second messenger in cell signal transduction. Its product controls the activity of cGAMP-activated phospholipase CapV, a patatin-like lipase that is a direct cGAMP receptor encoded in the dncV operon. Its function is as follows. Protects E.coli against phage infection. When capV and dncV are introduced in E.coli MG1655 there is 1000-fold protection against phage P1; protection against other phage (T2, T4, T5, T6 and lambda-vir) requires the 2 subsequent genes (cap2 and cap3). In another paper the capV-dncV-cap2-cap3 operon gives 10(4)-10(5)-fold protection against phages lambda, T2, T4 and T6, about 1000-fold protection against P1 and 10-fold protection against T5. The polypeptide is Cyclic GMP-AMP synthase (Escherichia coli (strain TW11681)).